The following is a 348-amino-acid chain: Protein RecA (348 aa).

An ATP-binding site is contributed by glycine 65–threonine 72.

The protein belongs to the RecA family.

It localises to the cytoplasm. Its function is as follows. Can catalyze the hydrolysis of ATP in the presence of single-stranded DNA, the ATP-dependent uptake of single-stranded DNA by duplex DNA, and the ATP-dependent hybridization of homologous single-stranded DNAs. It interacts with LexA causing its activation and leading to its autocatalytic cleavage. This Alteromonas mediterranea (strain DSM 17117 / CIP 110805 / LMG 28347 / Deep ecotype) protein is Protein RecA.